A 967-amino-acid chain; its full sequence is LRR receptor-like serine/threonine-protein kinase ERL2 (967 aa).

The signal sequence occupies residues 1–27 (MRRIETMKGLFFCLGMVVFMLLGSVSP). Over 28 to 585 (MNNEGKALMA…SLPKSQVFTR (558 aa)) the chain is Extracellular. 2 N-linked (GlcNAc...) asparagine glycosylation sites follow: Asn70 and Asn79. LRR repeat units follow at residues 74–97 (NVVS…GDLM), 98–120 (NLQS…IGNC), 122–145 (SLAY…SKLK), 146–166 (QLEF…ATLT), 170–192 (NLKT…LYWN), 194–216 (VLQY…MCQL), 218–240 (GLWY…IGNC), 242–261 (SFEI…PYNI), 265–287 (QVAT…IGLM), 289–311 (ALAV…LGNL), 313–335 (FTGK…LGNM), 337–359 (RLSY…LGKL), 361–382 (QLFE…NISS), 385–406 (ALNQ…EFRN), 409–431 (SLTY…LGHI), 433–456 (NLDT…GDLE), 457–479 (HLLI…FGNL), 481–503 (SIQI…LGQL), 505–527 (NINS…LTNC), and 529–550 (SLAN…MKNF). 2 N-linked (GlcNAc...) asparagine glycosylation sites follow: Asn228 and Asn239. N-linked (GlcNAc...) asparagine glycosylation is found at Asn310 and Asn334. A glycan (N-linked (GlcNAc...) asparagine) is linked at Asn379. Residues Asn414, Asn443, Asn462, and Asn469 are each glycosylated (N-linked (GlcNAc...) asparagine). 3 N-linked (GlcNAc...) asparagine glycosylation sites follow: Asn534, Asn539, and Asn549. Residues 586-606 (VAVICMVLGFITLICMIFIAV) traverse the membrane as a helical segment. Residues 607-967 (YKSKQQKPVL…FREDISKSSL (361 aa)) are Cytoplasmic-facing. Thr640 and Thr648 each carry phosphothreonine. The Protein kinase domain maps to 651-921 (LDEKYIIGYG…EVSRVLLSLV (271 aa)). Residues 657-665 (IGYGASSTV) and Lys679 each bind ATP. 2 positions are modified to phosphotyrosine: Tyr724 and Tyr763. Residue Asp776 is the Proton acceptor of the active site. Residue Tyr818 is modified to Phosphotyrosine. Thr826 bears the Phosphothreonine mark. The disordered stretch occupies residues 921–955 (VPSPPPKKLPSPAKVQEGEERRESHSSDTTTPQWF). Basic and acidic residues predominate over residues 936–946 (QEGEERRESHS).

This sequence belongs to the protein kinase superfamily. Ser/Thr protein kinase family. In terms of tissue distribution, mostly expressed in developing organs, including bud clusters, flowers, siliques and young rosettes. Also detected in mature aboveground organs, such as leaves, stems and pedicels, but barely in roots.

The protein resides in the membrane. It catalyses the reaction L-seryl-[protein] + ATP = O-phospho-L-seryl-[protein] + ADP + H(+). It carries out the reaction L-threonyl-[protein] + ATP = O-phospho-L-threonyl-[protein] + ADP + H(+). Functionally, receptor kinase that regulates inflorescence architecture and organ shape as well as stomatal patterning, including density and clustering, together with ERL1 and ER. The sequence is that of LRR receptor-like serine/threonine-protein kinase ERL2 (ERL2) from Arabidopsis thaliana (Mouse-ear cress).